The chain runs to 592 residues: Aspartate--tRNA ligase (592 aa).

Glu171 contacts L-aspartate. The tract at residues 195–198 (QLFK) is aspartate. Arg217 contributes to the L-aspartate binding site. ATP-binding positions include 217-219 (RDE) and Gln226. An L-aspartate-binding site is contributed by His448. Glu482 is a binding site for ATP. Arg489 provides a ligand contact to L-aspartate. 534-537 (GLDR) provides a ligand contact to ATP.

This sequence belongs to the class-II aminoacyl-tRNA synthetase family. Type 1 subfamily. In terms of assembly, homodimer.

The protein localises to the cytoplasm. It catalyses the reaction tRNA(Asp) + L-aspartate + ATP = L-aspartyl-tRNA(Asp) + AMP + diphosphate. Catalyzes the attachment of L-aspartate to tRNA(Asp) in a two-step reaction: L-aspartate is first activated by ATP to form Asp-AMP and then transferred to the acceptor end of tRNA(Asp). The chain is Aspartate--tRNA ligase from Vibrio vulnificus (strain CMCP6).